The chain runs to 51 residues: Ovomucoid (51 aa).

The Kazal-like domain maps to 1-49 (VDCSEYPQPACTTERRPVCGSNNKTYSNKCNFCNAVVKSNGTLTVSHFG). 3 disulfide bridges follow: C3–C33, C11–C30, and C19–C51. A glycan (N-linked (GlcNAc...) asparagine) is linked at N40.

Its subcellular location is the secreted. The chain is Ovomucoid from Polyplectron napoleonis (Palawan peacock-pheasant).